Reading from the N-terminus, the 206-residue chain is Ribosomal RNA small subunit methyltransferase G (206 aa).

S-adenosyl-L-methionine is bound by residues glycine 71, phenylalanine 76, 125 to 126, and arginine 139; that span reads IE.

Belongs to the methyltransferase superfamily. RNA methyltransferase RsmG family.

The protein resides in the cytoplasm. The catalysed reaction is guanosine(527) in 16S rRNA + S-adenosyl-L-methionine = N(7)-methylguanosine(527) in 16S rRNA + S-adenosyl-L-homocysteine. Its function is as follows. Specifically methylates the N7 position of guanine in position 527 of 16S rRNA. The chain is Ribosomal RNA small subunit methyltransferase G from Cereibacter sphaeroides (strain ATCC 17029 / ATH 2.4.9) (Rhodobacter sphaeroides).